Reading from the N-terminus, the 605-residue chain is Leucine aminopeptidase (605 aa).

A peptide is bound by residues Lys-374, Asp-379, and Lys-386. 2 residues coordinate Zn(2+): Lys-374 and Asp-379. Positions 384–401 are L13 loop; the sequence is NLKAAPGSMIDLMKFDMS. Lys-386 is a catalytic residue. Residues Asp-394, Met-396, Asp-399, Asp-459, and Glu-461 each contribute to the Zn(2+) site. Positions 399 and 459 each coordinate a peptide. The active site involves Arg-463.

Belongs to the peptidase M17 family. Homohexamer composed of dimer of trimers. Both the identity and concentration of metal ions available dictate the extent to which oligomerization occurs; Mn(2+) and Co(2+) induces oligomerization, whereas Mg(2+) has no effect, and Zn(2+) causes irreversible protein aggregation in vitro. Zn(2+) serves as cofactor.

The protein resides in the cytoplasm. The enzyme catalyses Release of an N-terminal amino acid, Xaa-|-Yaa-, in which Xaa is preferably Leu, but may be other amino acids including Pro although not Arg or Lys, and Yaa may be Pro. Amino acid amides and methyl esters are also readily hydrolyzed, but rates on arylamides are exceedingly low.. It catalyses the reaction L-cysteinylglycine + H2O = L-cysteine + glycine. Oligomerization is required for catalytic activity and is metal-dependent. The type of metal that binds the 2 metal binding sites influences catalytic activity and substrate specificity. In vitro, activated by Co(2+), Mn(2+), Ni(2+), Mg(2+) and Zn(2+) with decreasing strength. Occupancy of the site 2 is essential and sufficient for activating the enzyme but occupation of the 2 sites is necessary for full catalytic activity. Inhibited by fungal metabolite bestatin. Inhibited by Phe-Naphthyl (PNAP). Aminopeptidase which preferentially cleaves leucine residues from the N-terminus of peptides. Also, has some activity towards tryptophan and methionine and to a lesser extent towards phenylalanine. Has very low activity or no activity towards the other amino acids. In addition, cleaves the Cys-Gly dipeptide, probably as part of the glutathione regulation pathway; cleavage only occurs in the presence of Mn(2+). During the asexual blood stage, plays a role in the final step of host hemoglobin catabolism, by cleaving hemoglobin-derived oligopeptides providing a source of amino acids for the parasite protein synthesis and for the maintenance of osmotic homeostasis. During the asexual blood stage, may also play a role during the ring-trophozoite transition. The sequence is that of Leucine aminopeptidase from Plasmodium falciparum (isolate 3D7).